A 248-amino-acid polypeptide reads, in one-letter code: 2,3-bisphosphoglycerate-dependent phosphoglycerate mutase (248 aa).

Substrate contacts are provided by residues 8–15 (RHGESTWN), 21–22 (TG), Arg-60, 87–90 (ERHY), Lys-98, 114–115 (RR), and 183–184 (GN). His-9 functions as the Tele-phosphohistidine intermediate in the catalytic mechanism. Glu-87 serves as the catalytic Proton donor/acceptor.

It belongs to the phosphoglycerate mutase family. BPG-dependent PGAM subfamily. In terms of assembly, homodimer.

It catalyses the reaction (2R)-2-phosphoglycerate = (2R)-3-phosphoglycerate. The protein operates within carbohydrate degradation; glycolysis; pyruvate from D-glyceraldehyde 3-phosphate: step 3/5. In terms of biological role, catalyzes the interconversion of 2-phosphoglycerate and 3-phosphoglycerate. This chain is 2,3-bisphosphoglycerate-dependent phosphoglycerate mutase, found in Burkholderia vietnamiensis (strain G4 / LMG 22486) (Burkholderia cepacia (strain R1808)).